We begin with the raw amino-acid sequence, 257 residues long: Glutamate racemase (257 aa).

Substrate contacts are provided by residues 12 to 13 and 44 to 45; these read DS and YG. Cys-75 acts as the Proton donor/acceptor in catalysis. 76–77 provides a ligand contact to substrate; it reads NT. Catalysis depends on Cys-185, which acts as the Proton donor/acceptor. 186 to 187 provides a ligand contact to substrate; that stretch reads TH.

Belongs to the aspartate/glutamate racemases family.

It carries out the reaction L-glutamate = D-glutamate. It participates in cell wall biogenesis; peptidoglycan biosynthesis. Functionally, provides the (R)-glutamate required for cell wall biosynthesis. This is Glutamate racemase from Clostridium botulinum (strain Langeland / NCTC 10281 / Type F).